We begin with the raw amino-acid sequence, 171 residues long: Secretion monitor (171 aa).

An N-terminal signal peptide occupies residues 1–36 (MIGILNRWRQFGRRYFWPHLLLGMVAASLGLPTSLN).

The protein belongs to the SecM family.

It is found in the cytoplasm. Its subcellular location is the cytosol. The protein resides in the periplasm. Its function is as follows. Regulates secA expression by translational coupling of the secM secA operon. Translational pausing at a specific Pro residue 5 residues before the end of the protein may allow disruption of a mRNA repressor helix that normally suppresses secA translation initiation. This chain is Secretion monitor, found in Pectobacterium carotovorum subsp. carotovorum (strain PC1).